Consider the following 197-residue polypeptide: Large ribosomal subunit protein uL10 (197 aa).

Positions Gly163–Asn197 are disordered.

Belongs to the universal ribosomal protein uL10 family. In terms of assembly, part of the ribosomal stalk of the 50S ribosomal subunit. The N-terminus interacts with L11 and the large rRNA to form the base of the stalk. The C-terminus forms an elongated spine to which L12 dimers bind in a sequential fashion forming a multimeric L10(L12)X complex.

Functionally, forms part of the ribosomal stalk, playing a central role in the interaction of the ribosome with GTP-bound translation factors. The chain is Large ribosomal subunit protein uL10 from Pseudarthrobacter chlorophenolicus (strain ATCC 700700 / DSM 12829 / CIP 107037 / JCM 12360 / KCTC 9906 / NCIMB 13794 / A6) (Arthrobacter chlorophenolicus).